A 309-amino-acid polypeptide reads, in one-letter code: Probable lipid kinase YegS-like (309 aa).

Positions 1 to 133 (MPLTHIRLLL…IDIIRANNNY (133 aa)) constitute a DAGKc domain. ATP-binding positions include Ser-39, 65–71 (GDGSLNE), and Thr-95. Residues Leu-214, Asp-217, and Leu-219 each coordinate Mg(2+). The Proton acceptor role is filled by Glu-273.

This sequence belongs to the diacylglycerol/lipid kinase family. YegS lipid kinase subfamily. Mg(2+) serves as cofactor. The cofactor is Ca(2+).

It localises to the cytoplasm. Probably phosphorylates lipids; the in vivo substrate is unknown. This Shewanella frigidimarina (strain NCIMB 400) protein is Probable lipid kinase YegS-like.